A 235-amino-acid chain; its full sequence is 7-carboxy-7-deazaguanine synthase (235 aa).

Residues 25–27 (IQG) and Arg-40 contribute to the substrate site. Residues 31 to 235 (FTGTYSVFVR…PRLHLLVQLP (205 aa)) form the Radical SAM core domain. [4Fe-4S] cluster is bound by residues Cys-44, Cys-48, and Cys-51. Position 53 (Thr-53) interacts with Mg(2+). Thr-85 is a substrate binding site. S-adenosyl-L-methionine-binding positions include Gly-87 and 135-137 (SPK). Pro-235 contacts substrate.

It belongs to the radical SAM superfamily. 7-carboxy-7-deazaguanine synthase family. In terms of assembly, homodimer. Requires [4Fe-4S] cluster as cofactor. The cofactor is S-adenosyl-L-methionine. Mg(2+) is required as a cofactor.

It catalyses the reaction 6-carboxy-5,6,7,8-tetrahydropterin + H(+) = 7-carboxy-7-deazaguanine + NH4(+). It participates in purine metabolism; 7-cyano-7-deazaguanine biosynthesis. Its function is as follows. Catalyzes the complex heterocyclic radical-mediated conversion of 6-carboxy-5,6,7,8-tetrahydropterin (CPH4) to 7-carboxy-7-deazaguanine (CDG), a step common to the biosynthetic pathways of all 7-deazapurine-containing compounds. The sequence is that of 7-carboxy-7-deazaguanine synthase from Hyperthermus butylicus (strain DSM 5456 / JCM 9403 / PLM1-5).